A 752-amino-acid chain; its full sequence is Protein GCN20 (752 aa).

A2 carries the post-translational modification N-acetylalanine. 2 consecutive ABC transporter domains span residues 199-464 and 532-748; these read IHID…RKNA and IQLQ…AAGV. ATP contacts are provided by residues 232 to 239 and 565 to 572; these read GQNGIGKS and GANGCGKT.

The protein belongs to the ABC transporter superfamily. ABCF family. EF3 subfamily. Interacts (via N-terminus) with GCN1 (via C-terminus); this interaction stimulates GCN2 kinase activity in response to amino acid starvation. The GCN1-GCN20 complex interacts with GCN2 on translating ribosomes in amino acid-starved cells; this association stimulates GCN2 kinase activation by uncharged tRNAs, and hence allowing GCN4 translational activation and derepression of amino acid biosynthetic genes. Associates with ribosomes.

In terms of biological role, acts as a positive activator of the GCN2 protein kinase activity in response to in response to low amino acid, carbon, or purine availability. Component of the GCN1-GCN20 complex that forms a complex with GCN2 on translating ribosomes; during this process, GCN20 helps GCN1 to act as a chaperone to facilitate delivery of uncharged tRNAs that enter the A site of ribosomes to the tRNA-binding domain of GCN2, and hence stimulating GCN2 kinase activity. Participates in gene-specific mRNA translation activation, such as the transcriptional activator GCN4, by promoting the GCN2-mediated phosphorylation of eukaryotic translation initiation factor 2 (eIF-2-alpha/SUI2) on 'Ser-52', and hence allowing GCN4-mediated reprogramming of amino acid biosynthetic gene expression to alleviate nutrient depletion. This chain is Protein GCN20, found in Saccharomyces cerevisiae (strain ATCC 204508 / S288c) (Baker's yeast).